We begin with the raw amino-acid sequence, 194 residues long: Heme transporter hrg-1 (194 aa).

A run of 4 helical transmembrane segments spans residues 45 to 65, 71 to 91, 113 to 133, and 143 to 163; these read QIWIAWLGVSAGVMAGTVFAI, IAVTMCFISSGFATLVLHLHL, GATVSFLSFIAMVFCLVVAGI, and LMGANLWIAAVWFFMTSKWSA. Positions 182–183 match the Di-leucine motif motif; that stretch reads LL.

It belongs to the HRG family. As to expression, specifically expressed in the intestinal cells in larvae and adults.

It localises to the endosome membrane. The protein resides in the lysosome membrane. Its function is as follows. Heme transporter that regulates intracellular heme availability through the endosomal or lysosomal compartment. The sequence is that of Heme transporter hrg-1 (hrg-1) from Caenorhabditis elegans.